A 360-amino-acid chain; its full sequence is G-protein coupled receptor 15 (360 aa).

The Extracellular portion of the chain corresponds to 1 to 33; the sequence is MEPATALLIVDYYDYTSPDPPFLETPSHLSYTS. The helical transmembrane segment at 34–54 threads the bilayer; sequence VFLPIFYTVVFLTGVVGNFIL. Over 55-69 the chain is Cytoplasmic; it reads MIALHFKRGNRRLID. A helical membrane pass occupies residues 70–90; the sequence is IFIINLAASDFIFLVTVPLWM. The Extracellular portion of the chain corresponds to 91–120; sequence DKEASLGLWRTGSFLCKGSSYVISVNMHCS. A helical membrane pass occupies residues 121–141; that stretch reads VFLLTCMSMDRYLAIMHPALA. Topologically, residues 142 to 149 are cytoplasmic; sequence KRLRRRSS. A helical membrane pass occupies residues 150-170; the sequence is AYAVCAVVWIISCVLGLPTLL. Residues 171–192 lie on the Extracellular side of the membrane; sequence SRELTHIEGKPYCAEKKPTSLK. Residues 193-213 traverse the membrane as a helical segment; that stretch reads LMWGLVALITTFFVPLLSIVT. The Cytoplasmic segment spans residues 214–239; it reads CYCCITRRLCAHYQQSGKHNKKLKKS. The chain crosses the membrane as a helical span at residues 240-260; it reads IKIVIIAVAAFTVSWVPFNTF. The Extracellular portion of the chain corresponds to 261 to 284; it reads KLLAIVSGFQPEGLFHSEALQLAM. A helical transmembrane segment spans residues 285–305; the sequence is NVTGPLAFASSCVNPLIYYVF. Residues 306–360 are Cytoplasmic-facing; the sequence is DSYIRRAIVRCLCPCLKTHNFGSSTETSDSHLTKALSNFIHAEDFIRRRKRSVSL. The residue at position 359 (Ser359) is a Phosphoserine.

It belongs to the G-protein coupled receptor 1 family. In terms of assembly, interacts with adapter YWHAE; this interaction promotes ER-to-Golgi transport of GPR15. In terms of processing, phosphorylation is necessary for YWHAE binding and efficient surface expression. O-glycosylated. Sialylated O-glycans in the N-terminal tail inhibits binding of GPR15LG. Post-translationally, sulfation is required for efficient binding of GPR15LG. As to expression, highly expressed in gut tissues and lymphoid organs, largely restricted to TCRbeta+ cells. Expressed in fetal thymic dendritic epidermal T-cell precursors.

Its subcellular location is the cell membrane. Functionally, g protein-coupled receptor that plays an important role in immune homeostasis. Acts via its natural ligand GPR15LG, a chemokine-like polypeptide strongly expressed in gastrointestinal tissues. GPR15-GPR15LG signaling axis regulates intestinal homeostasis and inflammation through the migration of immune cells. Controls thereby the specific homing of T-cells, particularly FOXP3+ regulatory T-cells (Tregs), to the large intestine lamina propria. Also required for skin localization of thymus-derived dendritic epidermal T-cells. Plays an important role in mediating cytoprotective function as well as angiogenesis of thrombomodulin. Mechanistically, preferentially signals through the Gi/o pathway to inhibit adenylate cyclase activity and activate a phosphatidylinositol-calcium second messenger system that regulates the release of Ca(2+) ions from intracellular stores. The chain is G-protein coupled receptor 15 (Gpr15) from Mus musculus (Mouse).